We begin with the raw amino-acid sequence, 1280 residues long: MAEDSLRVGMISSGLAVLLNGEDAKENSSKARIVPHFDYSGHRPLERTIEFIFGLAEKSVGPLDGQVDSSLIRAVIKNQFSKLHGDLDVSVSQREGISVVHHGVGPPIVGLEEFSICGDIRIVKPPLVLESLALFSSARANACIWKGKWMYEVALETSGIQQLGWATLACPFTDQKGVGDADDSYAFDGRRVSKWNKEAEPYGQSWVAGDVIGCCIDLNCDEIYFYRNGVSLGAAFTGIRKLGPGFGYYPAISLSQGERCELNFGAYPFKYPVDGFQPLQEAPTRFSFATELLRCFSRLLDRPDRSLADTLSRLRRFASVEELFCPVSSAICDEFFYILEQDPLLAEYLGRGAFLSFLLETFRTQAPHDSSSLDKVLDVFLEFPQSHLIFEHVVNALACGCKTATLILTECPYSGPYPYLALACHLFKREELMVQWWRSLHFEFLFEGFLSCRSSNKHDLQHLMPVVWWPGSSEDISYESSMGFTISALSEAINKIEEKQRNLCLLVIQFIPPVSPPQLPGSAFRGFLQNLLLKNRGADRTLAPSGVTRNSVLVSLFSVILHFLSEGFAMLKSSEAVHHNVGFLHRGGQQKFPLSLFLKNDPHRADITRLGGLFSHISKSYPTDDQEEEIMRWEEGCMDDEQNRVTHATEQKPCCCLAYDTDLTKSLKDRGKNTAQSSRGRCSSIPERSSHVAAECSAGSFSEEIDDKPSTSNQSDPDFGYRPVRFMRTALQESRISSAILSEEELLDALLLLYHIAVAPNFKQASYYMSHQSQSISLLEETDKQIRERASCDQIKRLKEARNNYKEDVMDCVRHSAWFRISLFSRWKQRGMYALCMWVVQLLLVLSKMDSVFVYIPEFYLESLVDCFHVLRKSDPPFVPSTTFIKQGLSSFITFVVTHFNDSRISNTDLKDLLLQSISVLVQYKEYLEAFENNEAATRHMPAALLAAFDNRSWIPVTNIFLRLCKGSGFSSLKNGESSFSSTVFQALLRDACINDGELLSTFLNRLFNTLSWTITEFSVSVREMQEKYQVMEFQQRKCCVIFELSSNLARVLEFCTYAMPQAFLAGTDTNLRRLTELILFILNHMTSAVDDEFFDLSLRRQGQPSEKVSRGILLAPLVGIILNLLEASEDSKPKQQHDVIGLFASMDCPDTVYYGFQYLLEYNWDGCVSGDDAYVKKLGQLENFLSHLINRASSQEPERKEESFNKDTTDIEDNTCCICYAGEANAMIAPCSHRSCYGCITRHLLNCQRCFFCNATVIDVIRDKEEEEEEDDDGHKRST.

In terms of domain architecture, B30.2/SPRY spans 82-269 (KLHGDLDVSV…CELNFGAYPF (188 aa)). The chain crosses the membrane as a helical span at residues 551–571 (SVLVSLFSVILHFLSEGFAML). Positions 669–719 (DRGKNTAQSSRGRCSSIPERSSHVAAECSAGSFSEEIDDKPSTSNQSDPDF) are disordered. A helical membrane pass occupies residues 834–854 (ALCMWVVQLLLVLSKMDSVFV). The RING-type zinc-finger motif lies at 1217-1252 (CCICYAGEANAMIAPCSHRSCYGCITRHLLNCQRCF).

The protein resides in the membrane. It carries out the reaction S-ubiquitinyl-[E2 ubiquitin-conjugating enzyme]-L-cysteine + [acceptor protein]-L-lysine = [E2 ubiquitin-conjugating enzyme]-L-cysteine + N(6)-ubiquitinyl-[acceptor protein]-L-lysine.. E3 ubiquitin-protein ligase that promotes the ubiquitination and proteasomal degradation of KRP1 and KRP2. In Arabidopsis thaliana (Mouse-ear cress), this protein is E3 ubiquitin-protein ligase RKP (RKP).